The following is a 243-amino-acid chain: uncharacterized protein (243 aa).

This is an uncharacterized protein from Caenorhabditis elegans.